Consider the following 317-residue polypeptide: Lipopolysaccharide heptosyltransferase 1 (317 aa).

Residues T187, T188, K192, E222, M242, D261, T262, G263, and H266 each contribute to the ADP-L-glycero-beta-D-manno-heptose site.

Belongs to the glycosyltransferase 9 family.

The protein resides in the cell inner membrane. The enzyme catalyses an alpha-Kdo-(2-&gt;4)-alpha-Kdo-(2-&gt;6)-lipid A + ADP-L-glycero-beta-D-manno-heptose = an L-alpha-D-Hep-(1-&gt;5)-[alpha-Kdo-(2-&gt;4)]-alpha-Kdo-(2-&gt;6)-lipid A + ADP + H(+). The protein operates within bacterial outer membrane biogenesis; LPS core biosynthesis. In terms of biological role, glycosyltransferase involved in the biosynthesis of the core oligosaccharide region of lipopolysaccharide (LPS). Catalyzes the addition of the first heptose unit to one 3-deoxy-D-manno-octulosonic acid (Kdo) residue of the Kdo2-lipid A module. The sequence is that of Lipopolysaccharide heptosyltransferase 1 from Salmonella typhimurium (strain LT2 / SGSC1412 / ATCC 700720).